Reading from the N-terminus, the 82-residue chain is Small ribosomal subunit protein bS18 (82 aa).

It belongs to the bacterial ribosomal protein bS18 family. As to quaternary structure, part of the 30S ribosomal subunit. Forms a tight heterodimer with protein bS6.

Functionally, binds as a heterodimer with protein bS6 to the central domain of the 16S rRNA, where it helps stabilize the platform of the 30S subunit. This Rhizobium meliloti (strain 1021) (Ensifer meliloti) protein is Small ribosomal subunit protein bS18.